Here is a 325-residue protein sequence, read N- to C-terminus: MKPILLQGHERSITQIKYNREGDLLFTVAKDPIVNVWYSVNGERLGTYMGHTGAVWCVDADWDTKHVLTGSADNSCRLWDCETGKQLALLKTNSAVRTCGFDFGGNIIMFSTDKQMGYQCFVSFFDLRDPSQIDNNEPYMKIPCNDSKITSAVWGPLGECIIAGHESGELNQYSAKSGEVLVNVKEHSRQINDIQLSRDMTMFVTASKDNTAKLFDSTTLEHQKTFRTERPVNSAALSPNYDHVVLGGGQEAMDVTTTSTRIGKFEARFFHLAFEEEFGRVKGHFGPINSVAFHPDGKSYSSGGEDGYVRIHYFDPQYFEFEFEA.

WD repeat units follow at residues 1–39 (MKPILLQGHERSITQIKYNREGDLLFTVAKDPIVNVWYS), 43–81 (ERLGTYMGHTGAVWCVDADWDTKHVLTGSADNSCRLWDC), 87–127 (LALL…FFDL), 135–175 (NNEP…QYSA), and 180–217 (VLVNVKEHSRQINDIQLSRDMTMFVTASKDNTAKLFDS). Phosphothreonine is present on threonine 219. WD repeat units lie at residues 221 to 267 (EHQK…KFEA) and 275 to 316 (EEEF…YFDP). At lysine 264 the chain carries N6-acetyllysine. Residue lysine 282 forms a Glycyl lysine isopeptide (Lys-Gly) (interchain with G-Cter in ubiquitin) linkage. Tyrosine 308 is subject to Phosphotyrosine.

As to quaternary structure, component of the eukaryotic translation initiation factor 3 (eIF-3) complex, which is composed of 13 subunits: EIF3A, EIF3B, EIF3C, EIF3D, EIF3E, EIF3F, EIF3G, EIF3H, EIF3I, EIF3J, EIF3K, EIF3L and EIF3M. The eIF-3 complex appears to include 3 stable modules: module A is composed of EIF3A, EIF3B, EIF3G and EIF3I; module B is composed of EIF3F, EIF3H, and EIF3M; and module C is composed of EIF3C, EIF3D, EIF3E, EIF3K and EIF3L. EIF3C of module C binds EIF3B of module A and EIF3H of module B, thereby linking the three modules. EIF3J is a labile subunit that binds to the eIF-3 complex via EIF3B. The eIF-3 complex interacts with RPS6KB1 under conditions of nutrient depletion. Mitogenic stimulation leads to binding and activation of a complex composed of MTOR and RPTOR, leading to phosphorylation and release of RPS6KB1 and binding of EIF4B to eIF-3. Post-translationally, phosphorylated by TGF-beta type II receptor.

Its subcellular location is the cytoplasm. Its function is as follows. Component of the eukaryotic translation initiation factor 3 (eIF-3) complex, which is required for several steps in the initiation of protein synthesis. The eIF-3 complex associates with the 40S ribosome and facilitates the recruitment of eIF-1, eIF-1A, eIF-2:GTP:methionyl-tRNAi and eIF-5 to form the 43S pre-initiation complex (43S PIC). The eIF-3 complex stimulates mRNA recruitment to the 43S PIC and scanning of the mRNA for AUG recognition. The eIF-3 complex is also required for disassembly and recycling of post-termination ribosomal complexes and subsequently prevents premature joining of the 40S and 60S ribosomal subunits prior to initiation. The eIF-3 complex specifically targets and initiates translation of a subset of mRNAs involved in cell proliferation, including cell cycling, differentiation and apoptosis, and uses different modes of RNA stem-loop binding to exert either translational activation or repression. The protein is Eukaryotic translation initiation factor 3 subunit I of Homo sapiens (Human).